We begin with the raw amino-acid sequence, 173 residues long: Cytochrome c homolog (173 aa).

Topologically, residues 1 to 8 (MSGKELNK) are cytoplasmic. The helical; Signal-anchor transmembrane segment at 9 to 29 (IVAAILFASLIAMMVGFIANI) threads the bilayer. Topologically, residues 30-173 (LYKPVLEPKH…LFLKTYVHDK (144 aa)) are periplasmic. Residues cysteine 82, cysteine 85, histidine 86, and methionine 148 each coordinate heme c.

Belongs to the cytochrome c family. Binds 1 heme c group covalently per subunit.

Its subcellular location is the cell membrane. Functionally, may be involved in electron transfer from bc1 complex to aa3. The chain is Cytochrome c homolog (cycM) from Rickettsia bellii (strain RML369-C).